The following is a 317-amino-acid chain: Low affinity immunoglobulin gamma Fc region receptor II-a (317 aa).

An N-terminal signal peptide occupies residues 1 to 33 (MTMETQMSQNVCPRNLWLLQPLTVLLLLASADS). At 34–217 (QAAAPPKAVL…PSMGSSSPMG (184 aa)) the chain is on the extracellular side. Ig-like C2-type domains lie at 39–118 (PKAV…VHLT) and 122–204 (EWLV…VTIT). Intrachain disulfides connect C62–C104 and C143–C187. N-linked (GlcNAc...) asparagine glycosylation is found at N97 and N178. Residues 218–240 (IIVAVVIATAVAAIVAAVVALIY) traverse the membrane as a helical segment. Residues 241-317 (CRKKRISANS…PPNDHVNSNN (77 aa)) lie on the Cytoplasmic side of the membrane. 2 positions are modified to phosphotyrosine; by SRC-type Tyr-kinases: Y288 and Y304. The interval 292-317 (NPRAPTDDDKNIYLTLPPNDHVNSNN) is disordered.

As to quaternary structure, interacts with IGHG1. Interacts with INPP5D/SHIP1 and INPPL1/SHIP2, regulating its function. Interacts with APCS and FGR. Interacts with HCK. Phosphorylated by SRC-type Tyr-kinases such as LYN, BLK, FYN, HCK and SYK. As to expression, found on monocytes, neutrophils and eosinophil platelets.

Its subcellular location is the cell membrane. In terms of biological role, binds to the Fc region of immunoglobulins gamma. Low affinity receptor. By binding to IgG it initiates cellular responses against pathogens and soluble antigens. Promotes phagocytosis of opsonized antigens. The polypeptide is Low affinity immunoglobulin gamma Fc region receptor II-a (FCGR2A) (Homo sapiens (Human)).